Here is a 327-residue protein sequence, read N- to C-terminus: UPF0065 protein in gbd 5'region (327 aa).

The segment at residues 1–30 is a signal peptide (tat-type signal); that stretch reads MQRRHFIARAGIAAATAALGLAAMPAQAQA.

Belongs to the UPF0065 (bug) family. Predicted to be exported by the Tat system. The position of the signal peptide cleavage has not been experimentally proven.

It is found in the periplasm. The protein is UPF0065 protein in gbd 5'region of Cupriavidus necator (Alcaligenes eutrophus).